A 331-amino-acid polypeptide reads, in one-letter code: Outer membrane lipoprotein PM1514 (331 aa).

The first 20 residues, 1-20 (MQYFDIKKSLPVFCSLLITA), serve as a signal peptide directing secretion. Cysteine 21 carries N-palmitoyl cysteine lipidation. Cysteine 21 carries S-diacylglycerol cysteine lipidation.

It localises to the cell outer membrane. Its subcellular location is the cell surface. The protein is Outer membrane lipoprotein PM1514 of Pasteurella multocida (strain Pm70).